Here is a 335-residue protein sequence, read N- to C-terminus: Beta-ketoacyl-[acyl-carrier-protein] synthase III (335 aa).

Catalysis depends on residues Cys116 and His256. The tract at residues 257-261 (QANLR) is ACP-binding. Residue Asn286 is part of the active site.

This sequence belongs to the thiolase-like superfamily. FabH family. As to quaternary structure, homodimer.

It localises to the cytoplasm. It catalyses the reaction malonyl-[ACP] + acetyl-CoA + H(+) = 3-oxobutanoyl-[ACP] + CO2 + CoA. It participates in lipid metabolism; fatty acid biosynthesis. Its function is as follows. Catalyzes the condensation reaction of fatty acid synthesis by the addition to an acyl acceptor of two carbons from malonyl-ACP. Catalyzes the first condensation reaction which initiates fatty acid synthesis and may therefore play a role in governing the total rate of fatty acid production. Possesses both acetoacetyl-ACP synthase and acetyl transacylase activities. Its substrate specificity determines the biosynthesis of branched-chain and/or straight-chain of fatty acids. This is Beta-ketoacyl-[acyl-carrier-protein] synthase III from Porphyromonas gingivalis (strain ATCC 33277 / DSM 20709 / CIP 103683 / JCM 12257 / NCTC 11834 / 2561).